The following is a 413-amino-acid chain: ORC1-type DNA replication protein 10 (413 aa).

ATP is bound by residues 63-67 (VGKTA), tyrosine 211, and arginine 223.

Belongs to the CDC6/cdc18 family.

Functionally, involved in regulation of DNA replication. The chain is ORC1-type DNA replication protein 10 (orc10) from Halobacterium salinarum (strain ATCC 700922 / JCM 11081 / NRC-1) (Halobacterium halobium).